A 50-amino-acid polypeptide reads, in one-letter code: Sproutin (50 aa).

Serine 8 is subject to Phosphoserine; by PKC.

As to expression, brain.

Functionally, neurite outgrowth factor. This chain is Sproutin, found in Rattus norvegicus (Rat).